The chain runs to 81 residues: ATP synthase subunit c (81 aa).

Transmembrane regions (helical) follow at residues 5–25 and 57–77; these read IAAGALIGGGLIMAGGAIGAG and VGLVEAAYFINLAFMALFVFA.

The protein belongs to the ATPase C chain family. In terms of assembly, F-type ATPases have 2 components, F(1) - the catalytic core - and F(0) - the membrane proton channel. F(1) has five subunits: alpha(3), beta(3), gamma(1), delta(1), epsilon(1). F(0) has three main subunits: a(1), b(2) and c(10-14). The alpha and beta chains form an alternating ring which encloses part of the gamma chain. F(1) is attached to F(0) by a central stalk formed by the gamma and epsilon chains, while a peripheral stalk is formed by the delta and b chains.

The protein resides in the cell membrane. Its function is as follows. F(1)F(0) ATP synthase produces ATP from ADP in the presence of a proton or sodium gradient. F-type ATPases consist of two structural domains, F(1) containing the extramembraneous catalytic core and F(0) containing the membrane proton channel, linked together by a central stalk and a peripheral stalk. During catalysis, ATP synthesis in the catalytic domain of F(1) is coupled via a rotary mechanism of the central stalk subunits to proton translocation. In terms of biological role, key component of the F(0) channel; it plays a direct role in translocation across the membrane. A homomeric c-ring of between 10-14 subunits forms the central stalk rotor element with the F(1) delta and epsilon subunits. This is ATP synthase subunit c from Mycolicibacterium gilvum (strain PYR-GCK) (Mycobacterium gilvum (strain PYR-GCK)).